A 190-amino-acid chain; its full sequence is GTP cyclohydrolase 1 (190 aa).

Positions 75, 78, and 146 each coordinate Zn(2+).

This sequence belongs to the GTP cyclohydrolase I family. In terms of assembly, toroid-shaped homodecamer, composed of two pentamers of five dimers.

It catalyses the reaction GTP + H2O = 7,8-dihydroneopterin 3'-triphosphate + formate + H(+). It participates in cofactor biosynthesis; 7,8-dihydroneopterin triphosphate biosynthesis; 7,8-dihydroneopterin triphosphate from GTP: step 1/1. The sequence is that of GTP cyclohydrolase 1 from Campylobacter jejuni subsp. jejuni serotype O:23/36 (strain 81-176).